A 417-amino-acid polypeptide reads, in one-letter code: Tyrosine--tRNA ligase (417 aa).

Tyrosine 36 is an L-tyrosine binding site. A 'HIGH' region motif is present at residues 41–50 (PTADSLHIGH). Positions 170 and 174 each coordinate L-tyrosine. A 'KMSKS' region motif is present at residues 231–235 (KFGKS). Position 234 (lysine 234) interacts with ATP. The S4 RNA-binding domain occupies 351–417 (TNLVELLIEA…GKKKYFMIIH (67 aa)).

The protein belongs to the class-I aminoacyl-tRNA synthetase family. TyrS type 1 subfamily. In terms of assembly, homodimer.

Its subcellular location is the cytoplasm. The catalysed reaction is tRNA(Tyr) + L-tyrosine + ATP = L-tyrosyl-tRNA(Tyr) + AMP + diphosphate + H(+). Catalyzes the attachment of tyrosine to tRNA(Tyr) in a two-step reaction: tyrosine is first activated by ATP to form Tyr-AMP and then transferred to the acceptor end of tRNA(Tyr). The polypeptide is Tyrosine--tRNA ligase (Macrococcus caseolyticus (strain JCSC5402) (Macrococcoides caseolyticum)).